Consider the following 347-residue polypeptide: S-adenosylmethionine:tRNA ribosyltransferase-isomerase (347 aa).

Belongs to the QueA family. As to quaternary structure, monomer.

Its subcellular location is the cytoplasm. It carries out the reaction 7-aminomethyl-7-carbaguanosine(34) in tRNA + S-adenosyl-L-methionine = epoxyqueuosine(34) in tRNA + adenine + L-methionine + 2 H(+). The protein operates within tRNA modification; tRNA-queuosine biosynthesis. In terms of biological role, transfers and isomerizes the ribose moiety from AdoMet to the 7-aminomethyl group of 7-deazaguanine (preQ1-tRNA) to give epoxyqueuosine (oQ-tRNA). The protein is S-adenosylmethionine:tRNA ribosyltransferase-isomerase of Bordetella pertussis (strain Tohama I / ATCC BAA-589 / NCTC 13251).